We begin with the raw amino-acid sequence, 370 residues long: Formate dehydrogenase (370 aa).

Isoleucine 94 and asparagine 120 together coordinate substrate. NAD(+) is bound by residues 175–176 (RI), aspartate 196, 231–235 (PLHES), threonine 257, aspartate 283, and 312–315 (HMSG).

Belongs to the D-isomer specific 2-hydroxyacid dehydrogenase family. FDH subfamily. Homodimer.

It is found in the cytoplasm. It catalyses the reaction formate + NAD(+) = CO2 + NADH. Catalyzes the NAD(+)-dependent oxidation of formate to carbon dioxide. Formate oxidation is the final step in the methanol oxidation pathway in methylotrophic microorganisms. Has a role in the detoxification of exogenous formate in non-methylotrophic organisms. The chain is Formate dehydrogenase from Chaetomium thermophilum (strain DSM 1495 / CBS 144.50 / IMI 039719) (Thermochaetoides thermophila).